A 610-amino-acid polypeptide reads, in one-letter code: Elongation factor 4 (610 aa).

In terms of domain architecture, tr-type G spans 13 to 195; it reads SHIRNFSIVA…AIVRKLPAPK (183 aa). GTP-binding positions include 25-30 and 142-145; these read DHGKST and NKID.

This sequence belongs to the TRAFAC class translation factor GTPase superfamily. Classic translation factor GTPase family. LepA subfamily.

It is found in the cell inner membrane. The enzyme catalyses GTP + H2O = GDP + phosphate + H(+). In terms of biological role, required for accurate and efficient protein synthesis under certain stress conditions. May act as a fidelity factor of the translation reaction, by catalyzing a one-codon backward translocation of tRNAs on improperly translocated ribosomes. Back-translocation proceeds from a post-translocation (POST) complex to a pre-translocation (PRE) complex, thus giving elongation factor G a second chance to translocate the tRNAs correctly. Binds to ribosomes in a GTP-dependent manner. This chain is Elongation factor 4, found in Rhizobium etli (strain CIAT 652).